A 255-amino-acid polypeptide reads, in one-letter code: 4-hydroxy-tetrahydrodipicolinate reductase (255 aa).

NAD(+) contacts are provided by residues 13 to 18, 90 to 92, and 114 to 117; these read GCNGKM, CTT, and SANM. The Proton donor/acceptor role is filled by His147. His148 contributes to the (S)-2,3,4,5-tetrahydrodipicolinate binding site. Lys151 functions as the Proton donor in the catalytic mechanism. 157–158 serves as a coordination point for (S)-2,3,4,5-tetrahydrodipicolinate; sequence GT.

Belongs to the DapB family.

Its subcellular location is the cytoplasm. The catalysed reaction is (S)-2,3,4,5-tetrahydrodipicolinate + NAD(+) + H2O = (2S,4S)-4-hydroxy-2,3,4,5-tetrahydrodipicolinate + NADH + H(+). It carries out the reaction (S)-2,3,4,5-tetrahydrodipicolinate + NADP(+) + H2O = (2S,4S)-4-hydroxy-2,3,4,5-tetrahydrodipicolinate + NADPH + H(+). It participates in amino-acid biosynthesis; L-lysine biosynthesis via DAP pathway; (S)-tetrahydrodipicolinate from L-aspartate: step 4/4. Its function is as follows. Catalyzes the conversion of 4-hydroxy-tetrahydrodipicolinate (HTPA) to tetrahydrodipicolinate. The chain is 4-hydroxy-tetrahydrodipicolinate reductase from Clostridium tetani (strain Massachusetts / E88).